We begin with the raw amino-acid sequence, 208 residues long: Cysteine-rich protein 2 (208 aa).

The region spanning 5 to 57 is the LIM zinc-binding 1 domain; it reads CPKCDKTVYFAEKVSSLGKDWHRFCLRCEHCSKTLTPGGHAEHDGKPFCHKPC. At Lys23 the chain carries N6-acetyllysine. The segment at 98 to 117 is disordered; the sequence is TEERKASGPPKGPSKASSVT. Ser104 is subject to Phosphoserine. The span at 104 to 115 shows a compositional bias: low complexity; sequence SGPPKGPSKASS. The 53-residue stretch at 126–178 folds into the LIM zinc-binding 2 domain; that stretch reads CPRCNKRVYFAEKVTSLGKDWHRPCLRCERCGKTLTPGGHAEHDGQPYCHKPC. Lys138 and Lys144 each carry N6-acetyllysine.

In terms of assembly, interacts with TGFB1I1.

This is Cysteine-rich protein 2 (CRIP2) from Bos taurus (Bovine).